The primary structure comprises 271 residues: Calretinin (271 aa).

6 EF-hand domains span residues leucine 16–alanine 51, asparagine 63–phenylalanine 98, glycine 107–lysine 142, lysine 151–phenylalanine 186, leucine 195–lysine 230, and methionine 235–proline 270. 25 residues coordinate Ca(2+): aspartate 29, aspartate 31, asparagine 33, tyrosine 35, glutamate 40, aspartate 76, asparagine 78, aspartate 80, lysine 82, glutamate 87, aspartate 120, aspartate 122, serine 124, tyrosine 126, glutamate 131, aspartate 164, asparagine 166, aspartate 168, lysine 170, glutamate 175, aspartate 208, aspartate 210, serine 212, tyrosine 214, and glutamate 219. Tyrosine 214 is modified (phosphotyrosine).

This sequence belongs to the calbindin family.

It localises to the synapse. The protein localises to the cell projection. It is found in the dendrite. Calcium-binding protein involved in calcium homeostasis and signal transduction. It plays a critical role in buffering intracellular calcium levels and modulating calcium-dependent signaling pathways. Predominantly expressed in specific neuronal populations, influences synaptic plasticity and neuronal excitability, contributing to learning and memory. During embryonic development, it facilitates neuronal differentiation and maturation. The protein is Calretinin (CALB2) of Bos taurus (Bovine).